The chain runs to 173 residues: NADH-ubiquinone oxidoreductase chain 6 (173 aa).

6 helical membrane-spanning segments follow: residues 1–21, 27–47, 48–68, 87–107, 113–133, and 139–159; these read MTYFVVFLGLCFVLGGLAVAS, YGVVGLVLASVAGCGWLLSLG, VSFVSLVLFMVYLGGMLVVFV, VVGYGMSFIVVLVVGVVVGGF, FGVVTVDSAGVFFARLDFSGV, and CGVGMFLVAGWGLLLTLFVVL.

The protein belongs to the complex I subunit 6 family.

Its subcellular location is the mitochondrion membrane. The enzyme catalyses a ubiquinone + NADH + 5 H(+)(in) = a ubiquinol + NAD(+) + 4 H(+)(out). Its function is as follows. Core subunit of the mitochondrial membrane respiratory chain NADH dehydrogenase (Complex I) that is believed to belong to the minimal assembly required for catalysis. Complex I functions in the transfer of electrons from NADH to the respiratory chain. The immediate electron acceptor for the enzyme is believed to be ubiquinone. The sequence is that of NADH-ubiquinone oxidoreductase chain 6 (MT-ND6) from Cepphus grylle (Black guillemot).